The following is a 215-amino-acid chain: MFGFLKQVGDYTRDAVDAARNLAQGFSVTFDHMQRRPVTVQYPYEKLIPSERYRGRIHYEFDKCIACEVCVRVCPINLPVVDWVMNKATKKKELRNYSIDFGVCIFCGNCVEYCPTNCLSMTEEYELAAFDRHSLNYDNVALGRLPTSVTTDPSVVPLRELAYLPAGEMDPHGVASDRPRAGQLPAQVLETLTPPAKPTAKNDGQSSSEAKEGDA.

2 4Fe-4S ferredoxin-type domains span residues 55–84 and 95–124; these read GRIHYEFDKCIACEVCVRVCPINLPVVDWV and RNYSIDFGVCIFCGNCVEYCPTNCLSMTEE. [4Fe-4S] cluster is bound by residues Cys-64, Cys-67, Cys-70, Cys-74, Cys-104, Cys-107, Cys-110, and Cys-114. Basic and acidic residues predominate over residues 169–180; the sequence is MDPHGVASDRPR. The disordered stretch occupies residues 169-215; it reads MDPHGVASDRPRAGQLPAQVLETLTPPAKPTAKNDGQSSSEAKEGDA.

This sequence belongs to the complex I 23 kDa subunit family. In terms of assembly, NDH-1 is composed of at least 11 different subunits. [4Fe-4S] cluster serves as cofactor.

The protein localises to the cellular thylakoid membrane. The enzyme catalyses a plastoquinone + NADH + (n+1) H(+)(in) = a plastoquinol + NAD(+) + n H(+)(out). It catalyses the reaction a plastoquinone + NADPH + (n+1) H(+)(in) = a plastoquinol + NADP(+) + n H(+)(out). Its function is as follows. NDH-1 shuttles electrons from an unknown electron donor, via FMN and iron-sulfur (Fe-S) centers, to quinones in the respiratory and/or the photosynthetic chain. The immediate electron acceptor for the enzyme in this species is believed to be plastoquinone. Couples the redox reaction to proton translocation, and thus conserves the redox energy in a proton gradient. This is NAD(P)H-quinone oxidoreductase subunit I from Synechococcus sp. (strain CC9605).